The sequence spans 367 residues: MNIKSLLLGSAAALVAASGAQAADAIVAPEPEAVEYVRVCDAYGAGYFYIPGTETCLRVHGYVRYDVKGGDDVYTGSDRKGWDKGARFALMFNTNSETELGTLGTYTQLRFNYTSNNSRHDGQYGDFSDDRDVADGGVSTGTDLQFAYITLGGFKVGIDESEFHTFTGYLGDVINDDVVAAGSYRTGKIAYTFTGGNGFSAVIALEQGGEDVDNDYTIDGYMPHVVGGLKYAGGWGSIAGAVAYDPVIEEWATKVRGDVNITDRFSVWLQGAYSSAATPNQNYGQWGGDWAVWGGAKFIATEKATFNLQAAHDDWGKTAVTANVAYQLVPGFTITPEVSYTKFGGEWKDTVAEDNAWGGIVRFQRSF.

The signal sequence occupies residues 1–22 (MNIKSLLLGSAAALVAASGAQA).

It belongs to the alphaproteobacteria porin family. Monomer.

The protein resides in the cell outer membrane. Functionally, forms passive diffusion pores that allow small molecular weight hydrophilic materials across the outer membrane. The chain is Porin Omp2a (omp2a) from Brucella canis (strain ATCC 23365 / NCTC 10854 / RM-666).